The sequence spans 511 residues: Ribose import ATP-binding protein RbsA (511 aa).

2 consecutive ABC transporter domains span residues 7 to 242 and 256 to 500; these read LQIS…VGRE and CSTT…SGTQ. Residue 39-46 coordinates ATP; it reads GENGAGKS.

This sequence belongs to the ABC transporter superfamily. Ribose importer (TC 3.A.1.2.1) family. In terms of assembly, the complex is composed of an ATP-binding protein (RbsA), two transmembrane proteins (RbsC) and a solute-binding protein (RbsB).

The protein resides in the cell inner membrane. It carries out the reaction D-ribose(out) + ATP + H2O = D-ribose(in) + ADP + phosphate + H(+). Functionally, part of the ABC transporter complex RbsABC involved in ribose import. Responsible for energy coupling to the transport system. This chain is Ribose import ATP-binding protein RbsA, found in Ruegeria sp. (strain TM1040) (Silicibacter sp.).